A 344-amino-acid chain; its full sequence is Dihydroorotase (344 aa).

2 residues coordinate Zn(2+): histidine 14 and histidine 16. Substrate contacts are provided by residues 16-18 (HVR) and asparagine 42. Residues lysine 99, histidine 136, and histidine 174 each coordinate Zn(2+). Lysine 99 carries the N6-carboxylysine modification. Histidine 136 contacts substrate. Leucine 219 serves as a coordination point for substrate. Residue aspartate 247 participates in Zn(2+) binding. Aspartate 247 is a catalytic residue. Positions 251 and 263 each coordinate substrate.

The protein belongs to the metallo-dependent hydrolases superfamily. DHOase family. Class II DHOase subfamily. In terms of assembly, homodimer. The cofactor is Zn(2+).

The enzyme catalyses (S)-dihydroorotate + H2O = N-carbamoyl-L-aspartate + H(+). The protein operates within pyrimidine metabolism; UMP biosynthesis via de novo pathway; (S)-dihydroorotate from bicarbonate: step 3/3. Its function is as follows. Catalyzes the reversible cyclization of carbamoyl aspartate to dihydroorotate. In Leptothrix cholodnii (strain ATCC 51168 / LMG 8142 / SP-6) (Leptothrix discophora (strain SP-6)), this protein is Dihydroorotase.